We begin with the raw amino-acid sequence, 129 residues long: Small ribosomal subunit protein uS11 (129 aa).

Belongs to the universal ribosomal protein uS11 family. In terms of assembly, part of the 30S ribosomal subunit. Interacts with proteins S7 and S18. Binds to IF-3.

Functionally, located on the platform of the 30S subunit, it bridges several disparate RNA helices of the 16S rRNA. Forms part of the Shine-Dalgarno cleft in the 70S ribosome. This chain is Small ribosomal subunit protein uS11, found in Azoarcus sp. (strain BH72).